The chain runs to 166 residues: KH homology domain-containing protein 1C (166 aa).

A KH; atypical domain is found at 19 to 78 (PLVFDMEEDKEDYIFGPHDEYLHTLEVHSNTLIQLERWFTPTGQTRVTVVGPLKARLWVM).

It belongs to the KHDC1 family.

The chain is KH homology domain-containing protein 1C (Khdc1c) from Mus musculus (Mouse).